Consider the following 331-residue polypeptide: Protein C10 (331 aa).

Belongs to the poxviridae C4/C10 protein family.

This Vaccinia virus (strain Copenhagen) (VACV) protein is Protein C10.